Consider the following 365-residue polypeptide: DNA polymerase IV (365 aa).

Positions 14–198 (IIHIDMDAFF…LPIEKFHGVG (185 aa)) constitute a UmuC domain. Residues Asp18 and Asp116 each contribute to the Mg(2+) site. Residue Glu117 is part of the active site.

This sequence belongs to the DNA polymerase type-Y family. In terms of assembly, monomer. Mg(2+) is required as a cofactor.

It localises to the cytoplasm. It catalyses the reaction DNA(n) + a 2'-deoxyribonucleoside 5'-triphosphate = DNA(n+1) + diphosphate. Poorly processive, error-prone DNA polymerase involved in untargeted mutagenesis. Copies undamaged DNA at stalled replication forks, which arise in vivo from mismatched or misaligned primer ends. These misaligned primers can be extended by PolIV. Exhibits no 3'-5' exonuclease (proofreading) activity. May be involved in translesional synthesis, in conjunction with the beta clamp from PolIII. This chain is DNA polymerase IV, found in Streptococcus pyogenes serotype M3 (strain ATCC BAA-595 / MGAS315).